The primary structure comprises 314 residues: Serine/threonine-protein phosphatase CPPED1 (314 aa).

Serine 2 carries the post-translational modification Phosphoserine. Residues 47–250 are catalytic; sequence KAWSTGDCDN…KVVFSGHYHR (204 aa). The a divalent metal cation site is built by aspartate 53, aspartate 90, asparagine 127, and histidine 247. The residue at position 294 (serine 294) is a Phosphoserine.

Belongs to the metallophosphoesterase superfamily. CPPED1 family. The cofactor is a divalent metal cation. Expressed in subcutaneous adipose tissue.

Its subcellular location is the cytoplasm. It catalyses the reaction O-phospho-L-seryl-[protein] + H2O = L-seryl-[protein] + phosphate. The catalysed reaction is O-phospho-L-threonyl-[protein] + H2O = L-threonyl-[protein] + phosphate. Its function is as follows. Protein phosphatase that dephosphorylates AKT family kinase specifically at 'Ser-473', blocking cell cycle progression and promoting cell apoptosis. May play an inhibitory role in glucose uptake by adipocytes. In Homo sapiens (Human), this protein is Serine/threonine-protein phosphatase CPPED1 (CPPED1).